A 424-amino-acid polypeptide reads, in one-letter code: S-adenosylmethionine synthase (424 aa).

ATP is bound at residue His-14. Residue Asp-16 participates in Mg(2+) binding. Glu-42 provides a ligand contact to K(+). Residues Glu-55 and Gln-98 each contribute to the L-methionine site. Residues 98–108 (QSNDISRGIER) are flexible loop. Residues 165-167 (DAK), 242-243 (KF), Asp-251, 257-258 (RK), Ala-274, and Lys-278 contribute to the ATP site. Asp-251 is a binding site for L-methionine. Lys-282 is an L-methionine binding site.

The protein belongs to the AdoMet synthase family. In terms of assembly, homotetramer; dimer of dimers. The cofactor is Mg(2+). Requires K(+) as cofactor.

The protein localises to the cytoplasm. The enzyme catalyses L-methionine + ATP + H2O = S-adenosyl-L-methionine + phosphate + diphosphate. The protein operates within amino-acid biosynthesis; S-adenosyl-L-methionine biosynthesis; S-adenosyl-L-methionine from L-methionine: step 1/1. Functionally, catalyzes the formation of S-adenosylmethionine (AdoMet) from methionine and ATP. The overall synthetic reaction is composed of two sequential steps, AdoMet formation and the subsequent tripolyphosphate hydrolysis which occurs prior to release of AdoMet from the enzyme. In Azobacteroides pseudotrichonymphae genomovar. CFP2, this protein is S-adenosylmethionine synthase.